A 230-amino-acid chain; its full sequence is MSRATLDKNPHEVASMFDAVARRYDLTNTVLSLGQDRFWRRETCAALGIGPGDKVLDLAAGTAVSTVELAASGAWCVAADFSVGMLSAGRQRDVPKVAGDATRLPFADESFDAVTISFGLRNVVDHVAGLEEMARVTRPGGRLVVCEFSTPTNRAFATLYKEYLMKALPRMARAVASNPDAYVYLAESIRAWPDQAGLARRIEAAGWSQVRWRNLTGGIVALHAAVKPPR.

S-adenosyl-L-methionine is bound by residues Thr-62, Asp-80, Asp-100–Ala-101, and Ser-117.

It belongs to the class I-like SAM-binding methyltransferase superfamily. MenG/UbiE family.

It catalyses the reaction a 2-demethylmenaquinol + S-adenosyl-L-methionine = a menaquinol + S-adenosyl-L-homocysteine + H(+). The protein operates within quinol/quinone metabolism; menaquinone biosynthesis; menaquinol from 1,4-dihydroxy-2-naphthoate: step 2/2. In terms of biological role, methyltransferase required for the conversion of demethylmenaquinol (DMKH2) to menaquinol (MKH2). In Mycobacterium sp. (strain JLS), this protein is Demethylmenaquinone methyltransferase.